Reading from the N-terminus, the 339-residue chain is Phenylalanine--tRNA ligase alpha subunit (339 aa).

Glu254 contributes to the Mg(2+) binding site.

The protein belongs to the class-II aminoacyl-tRNA synthetase family. Phe-tRNA synthetase alpha subunit type 1 subfamily. Tetramer of two alpha and two beta subunits. Mg(2+) is required as a cofactor.

Its subcellular location is the cytoplasm. It carries out the reaction tRNA(Phe) + L-phenylalanine + ATP = L-phenylalanyl-tRNA(Phe) + AMP + diphosphate + H(+). The sequence is that of Phenylalanine--tRNA ligase alpha subunit from Clostridium botulinum (strain ATCC 19397 / Type A).